The sequence spans 115 residues: Evasin P1181 (115 aa).

Residues 1-25 (MALNWSFRVIFVSAMWCALLKFATL) form the signal peptide. 4 cysteine pairs are disulfide-bonded: cysteine 38–cysteine 58, cysteine 54–cysteine 94, cysteine 70–cysteine 99, and cysteine 89–cysteine 108. Asparagine 45, asparagine 72, and asparagine 103 each carry an N-linked (GlcNAc...) asparagine glycan.

Its subcellular location is the secreted. Salivary chemokine-binding protein which binds to host chemokines CCL3 and CCL4. The polypeptide is Evasin P1181 (Amblyomma maculatum (Gulf Coast tick)).